The primary structure comprises 787 residues: Protocadherin beta-15 (787 aa).

Residues 1 to 26 (MEPAGERFPEQRQVLILLLLLEVTLA) form the signal peptide. Over 27-690 (GWEPRRYSVM…AQADSLTVYL (664 aa)) the chain is Extracellular. Cadherin domains follow at residues 35–133 (VMEE…SPEF), 138–242 (ITLK…APEF), 247–347 (YEVQ…FPEL), 352–451 (LTSP…APAF), and 456–561 (YTLF…SPFV). N-linked (GlcNAc...) asparagine glycans are attached at residues asparagine 418 and asparagine 436. Residue asparagine 567 is glycosylated (N-linked (GlcNAc...) asparagine). In terms of domain architecture, Cadherin 6 spans 568 to 671 (GSAPCTELVP…LVDGFSQPYL (104 aa)). A helical transmembrane segment spans residues 691–711 (VVALASVSSLFLFSVLLFVAV). At 712–787 (RLCRRSRAAS…DSRRKSEFLE (76 aa)) the chain is on the cytoplasmic side.

It is found in the cell membrane. Its function is as follows. Potential calcium-dependent cell-adhesion protein. May be involved in the establishment and maintenance of specific neuronal connections in the brain. This Pan troglodytes (Chimpanzee) protein is Protocadherin beta-15 (PCDHB15).